A 646-amino-acid chain; its full sequence is Lipoteichoic acid synthase (646 aa).

Over 1 to 7 the chain is Cytoplasmic; it reads MSSQKKK. Residues 8-28 form a helical membrane-spanning segment; that stretch reads ISLFAFFLLTVITITLKTYFS. Over 29 to 43 the chain is Extracellular; it reads YYVDFSLGVKGLVQN. A helical transmembrane segment spans residues 44-64; it reads LILLMNPYSLVALVLSVFLFF. The Cytoplasmic segment spans residues 65-68; the sequence is KGKK. The helical transmembrane segment at 69–89 threads the bilayer; the sequence is AFWFMFIGGFLLTFLLYANVV. The Extracellular segment spans residues 90–119; it reads YFRFFSDFLTFSTLNQVGNVESMGGAVSAS. The helical transmembrane segment at 120 to 140 threads the bilayer; it reads FKWYDFVYFIDTLVYLFILIF. Residues 141 to 153 lie on the Cytoplasmic side of the membrane; that stretch reads KTKWLDTKAFSKK. A helical transmembrane segment spans residues 154–174; the sequence is FVPVVMAASVALFFLNLAFAE. Topologically, residues 175 to 646 are extracellular; that stretch reads TDRPELLTRT…ETGPKANSKK (472 aa). Mn(2+) contacts are provided by Glu255 and Thr300. Thr300 is a catalytic residue. Position 416 (His416) interacts with substrate. Mn(2+) is bound by residues Asp475 and His476. Positions 623–638 are enriched in basic and acidic residues; it reads NPDFKKVNPSKYKYET. Positions 623 to 646 are disordered; sequence NPDFKKVNPSKYKYETGPKANSKK.

Belongs to the LTA synthase family. Post-translationally, proteolytically cleaved.

Its subcellular location is the cell membrane. The protein localises to the secreted. It participates in cell wall biogenesis; lipoteichoic acid biosynthesis. Its function is as follows. Catalyzes the polymerization of lipoteichoic acid (LTA) polyglycerol phosphate, a reaction that presumably uses phosphatidylglycerol (PG) as substrate. Is required for staphylococcal growth and cell division process. This Staphylococcus aureus (strain USA300) protein is Lipoteichoic acid synthase (ltaS).